Reading from the N-terminus, the 219-residue chain is Transmembrane emp24 domain-containing protein 10 (219 aa).

Positions 1–31 are cleaved as a signal peptide; that stretch reads MSGLSGPLSWPGPLLSALLFLFLLGPSSVLG. The interval 1–142 is required for interaction with STX17; sequence MSGLSGPLSW…KNYEEIAKVE (142 aa). The Lumenal segment spans residues 32–185; sequence ISFHLPVNSR…RDTNESTNTR (154 aa). The GOLD domain occupies 41 to 193; it reads RKCLREEIHK…TRVLYFSIFS (153 aa). The tract at residues 147 to 178 is required for TMED10 and TMED2 cis-Golgi network localization; it reads LEVELRRLEDLSESIVNDFAYMKKREEEMRDT. Residues arginine 171 and arginine 176 each carry the dimethylated arginine modification. Asparagine 179 carries an N-linked (GlcNAc...) asparagine glycan. A helical membrane pass occupies residues 186 to 206; that stretch reads VLYFSIFSMFCLIGLATWQVF. The interaction with COPG1 stretch occupies residues 204-219; it reads QVFYLRRFFKAKKLIE. Over 207–219 the chain is Cytoplasmic; it reads YLRRFFKAKKLIE. The tract at residues 207–219 is interaction with ARF1 and IL1B; sequence YLRRFFKAKKLIE. Positions 211 to 212 match the COPII vesicle coat-binding motif; the sequence is FF. The COPI vesicle coat-binding motif lies at 211-219; sequence FFKAKKLIE.

This sequence belongs to the EMP24/GP25L family. Predominantly dimeric and to a lesser extent monomeric in the ER. Monomer and dimer in ERGIC and cis-Golgi network. Forms homooligomer (via GOLD domain); the assembly is promoted by direct binding with leaderless cargos and may form a protein channel that facilitates cargo entry into the ERGIC. Forms heterooligomeric complexes with other members of the p24 family such as TMED2, TMED7 and TMED9. Interacts (via GOLD domain) with TMED2 (via GOLD domain); the complex is required for export of TMED10 from the ER to the cis-Golgi network; the complex is proposed to be involved in cis-Golgi network dynamics and / or biogenesis. Associates with the COPI vesicle coat subunits (coatomer). Tetramerization of the cytoplasmic domain at the Golgi membrane in vitro; the complex is proposed to interact with COPI coatomer and induce budding of the vesicles. Interacts with COPG1; the interaction involves TMED10 homodimer. Interacts with ARF1 (GDP-bound); the interaction probably involves a TMED10 oligomer. Interacts with SEC23A, SEC24B, SEC24C and SEC24D components of the coat protein complex II/COPII, indicative of an association of TMED10 with the COPII vesicle coat. Interacts with CD59. Interacts with MPPE1/PGAP5; the complex might recruit and sort GPI-anchored proteins to the ER-exit site, or the interaction might lead to recycling of PGAP5 between the ER and the Golgi. Interacts with F2LR1/PAR2. Interacts with KDELR2/ERD2; the interaction is disrupted by KDELR2 ligand. Found in a complex composed at least of SURF4, TMED2 and TMED10. Associates with the presenilin-dependent gamma-secretase complex. Interacts with STX17; the interaction is direct. Interacts with IL-1; the interaction is direct. Interacts with RAB21 (active GTP-bound form); the interaction is indirect and regulates TMED10 abundance and localization at the Golgi. Ubiquitous.

The protein resides in the endoplasmic reticulum membrane. Its subcellular location is the endoplasmic reticulum-Golgi intermediate compartment membrane. It is found in the golgi apparatus membrane. The protein localises to the golgi apparatus. It localises to the cis-Golgi network membrane. The protein resides in the trans-Golgi network membrane. Its subcellular location is the cytoplasmic vesicle. It is found in the secretory vesicle membrane. The protein localises to the cell membrane. It localises to the melanosome. Functionally, cargo receptor involved in protein vesicular trafficking and quality control in the endoplasmic reticulum (ER) and Golgi. The p24 protein family is a group of transmembrane proteins that bind coat protein complex I/COPI and coat protein complex II/COPII involved in vesicular trafficking between the membranes. Acts at the lumenal side for incorporation of secretory cargo molecules into transport vesicles and involved in vesicle coat formation at the cytoplasmic side. Mainly functions in the early secretory pathway and cycles between the ER, ER-Golgi intermediate compartment (ERGIC) and Golgi, mediating cargo transport through COPI and COPII-coated vesicles. In COPII vesicle-mediated anterograde transport, involved in the transport of GPI-anchored proteins by acting together with TMED2 as their cargo receptor; the function specifically implies SEC24C and SEC24D of the COPII vesicle coat and lipid raft-like microdomains of the ER. Recognizes GPI anchors structural remodeled in the ER by the GPI inositol-deacylase/PGAP1 and the metallophosphoesterase MPPE1/PGAP5. In COPI vesicle-mediated retrograde transport, involved in the biogenesis of COPI vesicles and vesicle coat recruitment. Involved in trafficking of amyloid beta A4 protein and soluble APP-beta release (independent from the modulation of gamma-secretase activity). Involved in the KDELR2-mediated retrograde transport of the toxin A subunit (CTX-A-K63)together with COPI and the COOH terminus of KDELR2. On Golgi membranes, acts as a primary receptor for ARF1-GDP, a GTP-binding protein involved in COPI-vesicle formation. Increases coatomer-dependent GTPase-activating activity of ARFGAP2 which mediates the hydrolysis of ARF1-bound GTP and therefore modulates protein trafficking from the Golgi apparatus. Involved in the exocytic trafficking of G protein-coupled receptors F2LR1/PAR2 (trypsin and tryspin-like enzyme receptor), OPRM1 (opioid receptor) and P2RY4 (UTD and UDP receptor) from the Golgi to the plasma membrane, thus contributing to receptor resensitization. In addition to its cargo receptor activity, may also act as a protein channel after oligomerization, facilitating the post-translational entry of leaderless cytoplasmic cargo into the ERGIC. Involved in the translocation into ERGIC, the vesicle entry and the secretion of leaderless cargos (lacking the secretion signal sequence), including the mature form of interleukin 1/IL-1 family members, the alpha-crystallin B chain HSPB5, the carbohydrate-binding proteins galectin-1/LGALS1 and galectin-3/LGALS3, the microtubule-associated protein Tau/MAPT, and the annexin A1/ANXA1; the translocation process is dependent on cargo protein unfolding and enhanced by chaperones HSP90AB1 and HSP90B1/GRP9. Could also associates with the presenilin-dependent gamma-secretase complex in order to regulate gamma-cleavages of the amyloid beta A4 protein to yield amyloid-beta 40/Abeta40. The chain is Transmembrane emp24 domain-containing protein 10 from Rattus norvegicus (Rat).